An 804-amino-acid polypeptide reads, in one-letter code: Leucine--tRNA ligase (804 aa).

Positions 39–50 (PFPSGKGLHVGH) match the 'HIGH' region motif. Positions 573-577 (KMSKS) match the 'KMSKS' region motif. Residue lysine 576 participates in ATP binding.

Belongs to the class-I aminoacyl-tRNA synthetase family.

It is found in the cytoplasm. The enzyme catalyses tRNA(Leu) + L-leucine + ATP = L-leucyl-tRNA(Leu) + AMP + diphosphate. The sequence is that of Leucine--tRNA ligase from Lactobacillus johnsonii (strain CNCM I-12250 / La1 / NCC 533).